Reading from the N-terminus, the 354-residue chain is MKVIGVTRDDDGPQLLERERPSPDPGEALVRTLRVGVDGTDHEVLNGSHGGFPDGADHMILGHEAVGVVEEPNGTGLEAGQVVAPTVRRKPNGETNEYFRRGEPDMAPDGEYTERGIVGDHGFMAEYFTSPADFLVPVPKSVAEYGFLVEPLSITEKANEHAYATREPFDWRPDSACVLGNGSLGLLTLWMLDQEYDRTYCVGRRDRPDPTVDIIDEIGSTYVDSRETPVDELPGAYEAMDYIYEATGFAPHAFQTVKALDQNGVGVLLGIPEPWEFEVDGGSLHNEIVLHNKCLIGTVNSHVSHFEDAVETLQELPAWLLDDLVTTVTDPEHVEAAFEDGDDQIKAVVEFDSL.

Residues 1 to 27 (MKVIGVTRDDDGPQLLERERPSPDPGE) form a disordered region. The segment covering 7-22 (TRDDDGPQLLERERPS) has biased composition (basic and acidic residues). Asp38 contributes to the Zn(2+) binding site. Position 40 (Thr40) interacts with substrate. Zn(2+)-binding residues include His63 and Glu64. The segment at 91-110 (PNGETNEYFRRGEPDMAPDG) is disordered. Positions 114 and 150 each coordinate substrate. Glu150 lines the Zn(2+) pocket. NADP(+) is bound by residues 181 to 184 (NGSL), 204 to 205 (RR), 269 to 271 (LGI), and 298 to 300 (TVN). Residue Asn300 participates in substrate binding.

Belongs to the zinc-containing alcohol dehydrogenase family. Glucose 1-dehydrogenase subfamily. Zn(2+) serves as cofactor.

The enzyme catalyses D-glucose + NAD(+) = D-glucono-1,5-lactone + NADH + H(+). It catalyses the reaction D-glucose + NADP(+) = D-glucono-1,5-lactone + NADPH + H(+). Its function is as follows. Catalyzes the NAD(P)(+)-dependent oxidation of D-glucose to D-gluconate via gluconolactone. Can utilize both NAD(+) and NADP(+) as electron acceptor. Is involved in the degradation of glucose through a modified Entner-Doudoroff pathway. This is Glucose 1-dehydrogenase from Haloarcula marismortui (strain ATCC 43049 / DSM 3752 / JCM 8966 / VKM B-1809) (Halobacterium marismortui).